A 215-amino-acid polypeptide reads, in one-letter code: Cytochrome b6 (215 aa).

Residues 32–52 form a helical membrane-spanning segment; the sequence is IFYCLGGITFTSFVIQVASGF. Heme c is bound at residue Cys-35. Heme b contacts are provided by His-86 and His-100. The next 3 membrane-spanning stretches (helical) occupy residues 90–110, 116–136, and 186–206; these read ASMMVLMMILHIFRVYLTGGF, LTWVTGVILSVLTVSFGVTGY, and LHTFVLPLLTAVFMLMHFLMI. Heme b contacts are provided by His-187 and His-202.

The protein belongs to the cytochrome b family. PetB subfamily. As to quaternary structure, the 4 large subunits of the cytochrome b6-f complex are cytochrome b6, subunit IV (17 kDa polypeptide, PetD), cytochrome f and the Rieske protein, while the 4 small subunits are PetG, PetL, PetM and PetN. The complex functions as a dimer. Requires heme b as cofactor. It depends on heme c as a cofactor.

It localises to the plastid. It is found in the chloroplast thylakoid membrane. In terms of biological role, component of the cytochrome b6-f complex, which mediates electron transfer between photosystem II (PSII) and photosystem I (PSI), cyclic electron flow around PSI, and state transitions. This chain is Cytochrome b6, found in Chaetosphaeridium globosum (Charophycean green alga).